The sequence spans 1235 residues: ATP-dependent helicase/nuclease subunit A (1235 aa).

The 473-residue stretch at 10 to 482 (SIWTDDQWSA…IDLNQNFRSR (473 aa)) folds into the UvrD-like helicase ATP-binding domain. ATP is bound at residue 31–38 (AAAGSGKT). The UvrD-like helicase C-terminal domain maps to 509-799 (QAALKLGASY…RLMTIHSSKG (291 aa)).

Belongs to the helicase family. AddA subfamily. In terms of assembly, heterodimer of AddA and AddB/RexB. Requires Mg(2+) as cofactor.

The enzyme catalyses Couples ATP hydrolysis with the unwinding of duplex DNA by translocating in the 3'-5' direction.. It carries out the reaction ATP + H2O = ADP + phosphate + H(+). In terms of biological role, the heterodimer acts as both an ATP-dependent DNA helicase and an ATP-dependent, dual-direction single-stranded exonuclease. Recognizes the chi site generating a DNA molecule suitable for the initiation of homologous recombination. The AddA nuclease domain is required for chi fragment generation; this subunit has the helicase and 3' -&gt; 5' nuclease activities. The sequence is that of ATP-dependent helicase/nuclease subunit A from Bacillus velezensis (strain DSM 23117 / BGSC 10A6 / LMG 26770 / FZB42) (Bacillus amyloliquefaciens subsp. plantarum).